Consider the following 590-residue polypeptide: Phosphate-repressible phosphate permease pho-4 (590 aa).

The next 8 membrane-spanning stretches (helical) occupy residues 6 to 26 (FDYL…NIGA), 44 to 64 (YLQA…GVGA), 85 to 105 (ALLM…LTMA), 118 to 138 (IMGG…VQWV), 149 to 169 (VFLA…IIFL), 186 to 206 (FVMV…LLLW), 220 to 240 (IAGT…IFLM), and 246 to 266 (IVIL…PLLL). Topologically, residues 267 to 466 (RRGEVPPPPA…GALPEKGKAD (200 aa)) are cytoplasmic. The disordered stretch occupies residues 297-361 (ARRAAQNGDS…PQIKTMVGPR (65 aa)). The span at 313–322 (VTSSTSNPSA) shows a compositional bias: polar residues. Over residues 325 to 345 (DGEKGATITKDDSSYSHDHSE) the composition is skewed to basic and acidic residues. Transmembrane regions (helical) follow at residues 467-487 (VPVW…WTYG), 506-525 (GFSM…RLKL), 527-547 (VSTT…SGTW), and 561-581 (GWFI…GIII).

The protein belongs to the inorganic phosphate transporter (PiT) (TC 2.A.20) family.

The protein resides in the cell membrane. With respect to regulation, phosphate transport activity is competitively inhibited by vanadate and arsenate. High-affinity transporter for external inorganic phosphate. Acts probably as a sodium-phosphate symporter. Component of the high affinity phosphate transport system II (ptsII) necessary for scavenging phosphorus from the environment under conditions of limiting phosphorus. In Neurospora crassa (strain ATCC 24698 / 74-OR23-1A / CBS 708.71 / DSM 1257 / FGSC 987), this protein is Phosphate-repressible phosphate permease pho-4.